Here is an 85-residue protein sequence, read N- to C-terminus: Small ribosomal subunit protein uS17 (85 aa).

This sequence belongs to the universal ribosomal protein uS17 family. As to quaternary structure, part of the 30S ribosomal subunit.

One of the primary rRNA binding proteins, it binds specifically to the 5'-end of 16S ribosomal RNA. The sequence is that of Small ribosomal subunit protein uS17 from Lachnoclostridium phytofermentans (strain ATCC 700394 / DSM 18823 / ISDg) (Clostridium phytofermentans).